Here is a 433-residue protein sequence, read N- to C-terminus: 23S rRNA (uracil(1939)-C(5))-methyltransferase RlmD (433 aa).

The TRAM domain maps to 10-68; the sequence is RTTTRQIITVSVNDLDSFGQGVARHNGKTLFIPGLLPQENAEVAVTEDKKQYARAKVVR. [4Fe-4S] cluster is bound by residues cysteine 81, cysteine 87, cysteine 90, and cysteine 162. Residues glutamine 265, phenylalanine 294, asparagine 299, glutamate 315, asparagine 342, and aspartate 363 each coordinate S-adenosyl-L-methionine. Catalysis depends on cysteine 389, which acts as the Nucleophile.

This sequence belongs to the class I-like SAM-binding methyltransferase superfamily. RNA M5U methyltransferase family. RlmD subfamily.

The enzyme catalyses uridine(1939) in 23S rRNA + S-adenosyl-L-methionine = 5-methyluridine(1939) in 23S rRNA + S-adenosyl-L-homocysteine + H(+). Functionally, catalyzes the formation of 5-methyl-uridine at position 1939 (m5U1939) in 23S rRNA. This chain is 23S rRNA (uracil(1939)-C(5))-methyltransferase RlmD, found in Shigella flexneri serotype 5b (strain 8401).